Here is a 41-residue protein sequence, read N- to C-terminus: uncharacterized protein (41 aa).

Residues 10-32 (LIILAVPFMIKTSLKTNLIFFFL) form a helical membrane-spanning segment.

The protein resides in the cell inner membrane. This is an uncharacterized protein from Escherichia coli (strain K12).